The primary structure comprises 193 residues: MAQNAKHRVPFRRRREGKTDFRQRLGLLLSGKPRLVARKSLNNIIAQLMAYDEKGDIVLVSAHSRELVKMGYKGHCGNLPAAYLTGLLLGKKAVEEGLEEAILDKGLHRATKGAAIFAVLKGALDAGMDIPCGEEIIADEERLNGTHIKQYAELLKEDEEAYKKQFSKYLEKGLNPEDLPEHFEELKGKILNL.

The protein belongs to the universal ribosomal protein uL18 family. As to quaternary structure, part of the 50S ribosomal subunit. Contacts the 5S and 23S rRNAs.

Functionally, this is one of the proteins that bind and probably mediate the attachment of the 5S RNA into the large ribosomal subunit, where it forms part of the central protuberance. This chain is Large ribosomal subunit protein uL18, found in Methanococcus vannielii (strain ATCC 35089 / DSM 1224 / JCM 13029 / OCM 148 / SB).